The primary structure comprises 102 residues: Protein translation factor SUI1 homolog (102 aa).

Belongs to the SUI1 family.

This is Protein translation factor SUI1 homolog from Cenarchaeum symbiosum (strain A).